The sequence spans 145 residues: Ribosomal RNA large subunit methyltransferase H (145 aa).

S-adenosyl-L-methionine-binding positions include Leu-64, Gly-93, and 112–117 (LSALTF).

Belongs to the RNA methyltransferase RlmH family. Homodimer.

It is found in the cytoplasm. The enzyme catalyses pseudouridine(1915) in 23S rRNA + S-adenosyl-L-methionine = N(3)-methylpseudouridine(1915) in 23S rRNA + S-adenosyl-L-homocysteine + H(+). Specifically methylates the pseudouridine at position 1915 (m3Psi1915) in 23S rRNA. This Prochlorococcus marinus (strain SARG / CCMP1375 / SS120) protein is Ribosomal RNA large subunit methyltransferase H.